The following is a 1163-amino-acid chain: Ankyrin repeat-containing protein F37A4.4 (1163 aa).

The stretch at 856-885 (YGNTALHVATRRGYQNLVEILIKHGADRSF) is one ANK repeat. The BRCT domain occupies 929-1025 (LCVPEKFPVS…KLIEKDCDYL (97 aa)).

The chain is Ankyrin repeat-containing protein F37A4.4 from Caenorhabditis elegans.